The primary structure comprises 149 residues: Putative pre-16S rRNA nuclease (149 aa).

This sequence belongs to the YqgF nuclease family.

It is found in the cytoplasm. Could be a nuclease involved in processing of the 5'-end of pre-16S rRNA. This Burkholderia multivorans (strain ATCC 17616 / 249) protein is Putative pre-16S rRNA nuclease.